The following is a 471-amino-acid chain: ATP synthase subunit beta (471 aa).

153 to 160 (GGAGVGKT) lines the ATP pocket.

This sequence belongs to the ATPase alpha/beta chains family. In terms of assembly, F-type ATPases have 2 components, CF(1) - the catalytic core - and CF(0) - the membrane proton channel. CF(1) has five subunits: alpha(3), beta(3), gamma(1), delta(1), epsilon(1). CF(0) has four main subunits: a(1), b(1), b'(1) and c(9-12).

The protein resides in the cell membrane. It carries out the reaction ATP + H2O + 4 H(+)(in) = ADP + phosphate + 5 H(+)(out). Produces ATP from ADP in the presence of a proton gradient across the membrane. The catalytic sites are hosted primarily by the beta subunits. In Roseiflexus castenholzii (strain DSM 13941 / HLO8), this protein is ATP synthase subunit beta.